Here is a 101-residue protein sequence, read N- to C-terminus: Urease subunit beta (101 aa).

Belongs to the urease beta subunit family. Heterotrimer of UreA (gamma), UreB (beta) and UreC (alpha) subunits. Three heterotrimers associate to form the active enzyme.

The protein resides in the cytoplasm. It carries out the reaction urea + 2 H2O + H(+) = hydrogencarbonate + 2 NH4(+). Its pathway is nitrogen metabolism; urea degradation; CO(2) and NH(3) from urea (urease route): step 1/1. The chain is Urease subunit beta from Azotobacter vinelandii (strain DJ / ATCC BAA-1303).